A 319-amino-acid polypeptide reads, in one-letter code: Cobalamin biosynthesis protein CbiB (319 aa).

A run of 5 helical transmembrane segments spans residues 56-76, 82-102, 153-173, 204-224, and 296-316; these read VMWV…LALA, WFGW…RSLA, VDGI…LAMA, VANY…AGLC, and LMWV…CGLS.

It belongs to the CobD/CbiB family.

The protein resides in the cell membrane. It participates in cofactor biosynthesis; adenosylcobalamin biosynthesis. Converts cobyric acid to cobinamide by the addition of aminopropanol on the F carboxylic group. However, the true cosubstrate could be (R)-1-amino-2-propanol O-2-phosphate, leading to cobinamide phosphate. This is Cobalamin biosynthesis protein CbiB from Salmonella paratyphi B (strain ATCC BAA-1250 / SPB7).